A 352-amino-acid chain; its full sequence is B1 bradykinin receptor (352 aa).

The Extracellular portion of the chain corresponds to 1–41; sequence MAAQTLLELQPSNQSQLSALNTTSCDNAREAWDLLYQVLPI. Residues asparagine 13 and asparagine 21 are each glycosylated (N-linked (GlcNAc...) asparagine). The helical transmembrane segment at 42 to 62 threads the bilayer; it reads FILTICAFGLLGNLFVLSVFL. At 63–72 the chain is on the cytoplasmic side; it reads LLRRRLTVAE. A helical transmembrane segment spans residues 73-93; the sequence is IYLVNLAASDLVFVLGLPFWA. Over 94-110 the chain is Extracellular; it reads QNIWNQFNWPFGDLLCR. A disulfide bridge links cysteine 109 with cysteine 188. The helical transmembrane segment at 111-131 threads the bilayer; sequence VVNGVIKANLFISIFLMVAIS. Over 132–153 the chain is Cytoplasmic; that stretch reads QDRYCVLVHPMASRRRRRRRRA. Residues 154 to 174 form a helical membrane-spanning segment; the sequence is RATCMVIWAVGALLSTPTFLL. Topologically, residues 175–206 are extracellular; sequence RSVSAVQDLNISACILLLPHQAWHVARIVELN. Asparagine 184 carries N-linked (GlcNAc...) asparagine glycosylation. The helical transmembrane segment at 207-227 threads the bilayer; it reads VLGFLLPLAAIIFFNGHILAS. Residues 228–250 lie on the Cytoplasmic side of the membrane; that stretch reads LRGQGEVSQTRIGGPKDCKTTVL. A helical membrane pass occupies residues 251-271; the sequence is ILTLVAAFLVCWAPYHCFAFL. Residues 272–294 lie on the Extracellular side of the membrane; sequence EFLFQVRAVRGCFWEDFIDLGLQ. Residues 295-315 form a helical membrane-spanning segment; it reads LANFFAFTNSCLNPVIYVFVG. The Cytoplasmic segment spans residues 316-326; that stretch reads RLFRTKVWELY. The S-palmitoyl cysteine moiety is linked to residue cysteine 329.

This sequence belongs to the G-protein coupled receptor 1 family. Bradykinin receptor subfamily. BDKRB1 sub-subfamily.

The protein localises to the cell membrane. In terms of biological role, this is a receptor for bradykinin. Could be a factor in chronic pain and inflammation. This chain is B1 bradykinin receptor (BDKRB1), found in Tupaia minor (Pigmy tree shrew).